The following is an 84-amino-acid chain: ORF8b protein (84 aa).

One can recognise an SARS ORF8 Ig-like domain in the interval 1 to 82 (MCLKILVRYN…RDVLVVLNKR (82 aa)). Cys-22 and Cys-40 are disulfide-bonded.

The protein localises to the host cytoplasm. It is found in the host nucleus. Functionally, non-structural protein which is dispensable for virus replication in cell culture. The sequence is that of ORF8b protein from Severe acute respiratory syndrome coronavirus (SARS-CoV).